We begin with the raw amino-acid sequence, 192 residues long: Ion-translocating oxidoreductase complex subunit B (192 aa).

Positions 1–26 (MNAIWIAVAAVSLLGLAFGAILGYAS) are hydrophobic. One can recognise a 4Fe-4S domain in the interval 32-91 (EDDPVVEKIDEILPQSQCGQCGYPGCRPYAETISCNGEKINRCAPGGEAVMLKIAELLNV). [4Fe-4S] cluster contacts are provided by Cys-49, Cys-52, Cys-57, Cys-74, Cys-117, Cys-120, Cys-123, Cys-127, Cys-147, Cys-150, Cys-153, and Cys-157. 2 consecutive 4Fe-4S ferredoxin-type domains span residues 108–137 (MVAVIDENNCIGCTKCIQACPVDAIVGATR) and 138–167 (AMHTVMSDLCTGCNLCVDPCPTHCISLQPV).

This sequence belongs to the 4Fe4S bacterial-type ferredoxin family. RnfB subfamily. The complex is composed of six subunits: RsxA, RsxB, RsxC, RsxD, RsxE and RsxG. It depends on [4Fe-4S] cluster as a cofactor.

It localises to the cell inner membrane. In terms of biological role, part of a membrane-bound complex that couples electron transfer with translocation of ions across the membrane. Required to maintain the reduced state of SoxR. The chain is Ion-translocating oxidoreductase complex subunit B from Escherichia coli O6:K15:H31 (strain 536 / UPEC).